Reading from the N-terminus, the 3004-residue chain is Guanylate cyclase beta (3004 aa).

Topologically, residues 1 to 66 are cytoplasmic; the sequence is MKETDKIKSE…FSLYNFIRRL (66 aa). The helical transmembrane segment at 67–87 threads the bilayer; sequence ISLDAVIVYTLFMTVYIFSEI. Residues 88-94 lie on the Extracellular side of the membrane; the sequence is SQGITKK. The helical transmembrane segment at 95–115 threads the bilayer; the sequence is YLFVDTAISLFLNIGILVVIE. Residues 116 to 300 lie on the Cytoplasmic side of the membrane; sequence SLFELKLLKD…TFCIKMNNVV (185 aa). A helical membrane pass occupies residues 301 to 321; that stretch reads YYLIFMYILFVLLSIIIKAIF. Topologically, residues 322–334 are extracellular; sequence YRKGKLLENSNDT. Asn332 carries N-linked (GlcNAc...) asparagine glycosylation. Residues 335–355 form a helical membrane-spanning segment; that stretch reads FFTVLEDFIGLYILVLPVMLY. The Cytoplasmic portion of the chain corresponds to 356–991; that stretch reads SEKSLIYIIQ…GRLNRFSLCR (636 aa). The chain crosses the membrane as a helical span at residues 992–1012; sequence AFLWIIYLKVMIGSFYFFHNF. The Extracellular segment spans residues 1013–1022; sequence DNFFSGSSIS. A helical membrane pass occupies residues 1023-1043; sequence SILYSQTAFAIFHYSLIVAFA. At 1044-1072 the chain is on the cytoplasmic side; it reads SYEIDIPYKFIRNFPYIYQLARRKYFLNN. The chain crosses the membrane as a helical span at residues 1073-1093; that stretch reads TIIFLNIVESIFSSFISYYIL. Topologically, residues 1094–1105 are extracellular; sequence RGNLFNLITHRK. Residues 1106–1126 traverse the membrane as a helical segment; it reads FTFHIFVLNFFLISEKILLFS. At 1127-1130 the chain is on the cytoplasmic side; the sequence is KTWH. The helical transmembrane segment at 1131–1151 threads the bilayer; that stretch reads IFFFIMTIIIVSILFIYINIY. Residues 1152-1171 lie on the Extracellular side of the membrane; it reads TLVDCLITGKCEFSLFDPED. Residues 1172–1192 form a helical membrane-spanning segment; it reads SYFWISLLPILYINFIIDKFM. Over 1193 to 1297 the chain is Cytoplasmic; sequence KFVKNKIYPD…YEKRNKLKLR (105 aa). The helical transmembrane segment at 1298–1318 threads the bilayer; the sequence is IIILLLFIIFLITFTIQIIIS. At 1319–1327 the chain is on the extracellular side; it reads KFIEKKLHS. Residues 1328-1348 form a helical membrane-spanning segment; the sequence is LSYLTVIYYIVAVLYLIKILI. The Cytoplasmic segment spans residues 1349-1353; that stretch reads RNKTN. The chain crosses the membrane as a helical span at residues 1354–1374; that stretch reads YTYFYIIGKLLLVIGYLLEIS. The Extracellular segment spans residues 1375–1394; the sequence is ENSVNNIINMLVTYSFTVCY. A helical transmembrane segment spans residues 1395 to 1415; the sequence is IFFISFKILEGLVMCIIILSI. Over 1416–1457 the chain is Cytoplasmic; that stretch reads AIWVYYHKNNNLNAMCTDFCDNPYTSLDNLEYINISCICKQQ. The helical transmembrane segment at 1458-1478 threads the bilayer; sequence IFTFLICTLSFTLICLFMKYY. Residues 1479–1500 are Extracellular-facing; the sequence is EIYYLKKKFLTRYKQKVNLGKQ. A helical transmembrane segment spans residues 1501 to 1521; the sequence is IEILHTMLPSFLVEYLLVSDP. Residues 1522 to 2563 are Cytoplasmic-facing; sequence KADGIMVGKN…EIINIDLTKK (1042 aa). Positions 1541–1696 constitute a Guanylate cyclase 1 domain; it reads SVIFCDIDDF…DTVNTASRMK (156 aa). Over residues 2463–2476 the composition is skewed to polar residues; the sequence is TMSNSKSGQTNITT. The interval 2463-2491 is disordered; sequence TMSNSKSGQTNITTDNKKSQIKKNGDVNK. The span at 2477–2488 shows a compositional bias: basic and acidic residues; it reads DNKKSQIKKNGD. Residues 2564-2584 form a helical membrane-spanning segment; it reads LIIIFVISELILSLCNVIELS. Topologically, residues 2585–2594 are extracellular; sequence YYENKETPND. Residues 2595–2615 form a helical membrane-spanning segment; sequence FIVIIWLIRSIYLFTITFIWL. The Cytoplasmic segment spans residues 2616–2634; the sequence is LLKTKLKEYKDNSSKMMWT. The helical transmembrane segment at 2635–2655 threads the bilayer; the sequence is TFILNIFLSSWGIIMIDLACI. Residues 2656-2667 lie on the Extracellular side of the membrane; that stretch reads HYSNLVGNSRER. Residues 2668–2688 form a helical membrane-spanning segment; sequence SIFFMKDATELIISMQLIFVK. Topologically, residues 2689–2695 are cytoplasmic; it reads NMLFKHK. Residues 2696 to 2716 form a helical membrane-spanning segment; that stretch reads FFFFVFFFVFLMYSFFKLFVI. Over 2717-2722 the chain is Extracellular; sequence HVCELR. A helical membrane pass occupies residues 2723-2743; that stretch reads ICCSILLILSINILYFWYSEY. At 2744–3004 the chain is on the cytoplasmic side; the sequence is LDRTQYIIKR…KLREQNKVKG (261 aa). A Guanylate cyclase 2 domain is found at 2793 to 2927; sequence AFLFADIVGF…LDVLIANHIE (135 aa). Residues Asp2798, Ile2799, and Asp2842 each contribute to the Mg(2+) site.

In the N-terminal section; belongs to the cation transport ATPase (P-type) (TC 3.A.3) family. Type IV subfamily. It in the C-terminal section; belongs to the adenylyl cyclase class-4/guanylyl cyclase family. Mg(2+) serves as cofactor. It depends on Mn(2+) as a cofactor.

The protein resides in the membrane. The enzyme catalyses GTP = 3',5'-cyclic GMP + diphosphate. Functionally, catalyzes the synthesis of the second messenger cGMP from GTP. Probably by regulating cGMP production, required for ookinete gliding motility, which is necessary for the ookinete to traverse the midgut epithelium of the mosquito. The sequence is that of Guanylate cyclase beta from Plasmodium berghei (strain Anka).